The primary structure comprises 123 residues: Large ribosomal subunit protein uL29 (123 aa).

The residue at position 19 (Lys19) is an N6-acetyllysine. Residue Lys25 forms a Glycyl lysine isopeptide (Lys-Gly) (interchain with G-Cter in SUMO2) linkage. Ser29 bears the Phosphoserine mark. Lys43 carries the post-translational modification N6-acetyllysine. Positions 85–123 (PKKTRAMRRRLNKHEESLKTKKQQRKERLYPLRKYAVKA) are disordered. A compositionally biased stretch (basic residues) spans 86–96 (KKTRAMRRRLN).

This sequence belongs to the universal ribosomal protein uL29 family. As to quaternary structure, component of the large ribosomal subunit.

It localises to the cytoplasm. Its function is as follows. Component of the large ribosomal subunit. The ribosome is a large ribonucleoprotein complex responsible for the synthesis of proteins in the cell. This chain is Large ribosomal subunit protein uL29 (RPL35), found in Oryctolagus cuniculus (Rabbit).